The following is a 298-amino-acid chain: Protoheme IX farnesyltransferase (298 aa).

8 helical membrane-spanning segments follow: residues 24 to 44 (VVSL…PAWP), 46 to 66 (WTTI…AAAF), 97 to 117 (LVFA…VVNP), 118 to 138 (LTMW…TVLL), 146 to 166 (IVIG…AATG), 172 to 192 (ALLL…ALAL), 231 to 251 (LLPV…VLLG), and 278 to 298 (IWYL…PIPV).

It belongs to the UbiA prenyltransferase family. Protoheme IX farnesyltransferase subfamily.

It is found in the cell inner membrane. It catalyses the reaction heme b + (2E,6E)-farnesyl diphosphate + H2O = Fe(II)-heme o + diphosphate. Its pathway is porphyrin-containing compound metabolism; heme O biosynthesis; heme O from protoheme: step 1/1. Functionally, converts heme B (protoheme IX) to heme O by substitution of the vinyl group on carbon 2 of heme B porphyrin ring with a hydroxyethyl farnesyl side group. The protein is Protoheme IX farnesyltransferase of Thiobacillus denitrificans (strain ATCC 25259 / T1).